Consider the following 190-residue polypeptide: Pyridoxal 5'-phosphate synthase subunit PdxT (190 aa).

46–48 lines the L-glutamine pocket; sequence GES. Cys-78 serves as the catalytic Nucleophile. L-glutamine contacts are provided by residues Arg-108 and 137–138; that span reads IR. Residues His-174 and Glu-176 each act as charge relay system in the active site.

It belongs to the glutaminase PdxT/SNO family. As to quaternary structure, in the presence of PdxS, forms a dodecamer of heterodimers. Only shows activity in the heterodimer.

It carries out the reaction aldehydo-D-ribose 5-phosphate + D-glyceraldehyde 3-phosphate + L-glutamine = pyridoxal 5'-phosphate + L-glutamate + phosphate + 3 H2O + H(+). The enzyme catalyses L-glutamine + H2O = L-glutamate + NH4(+). It functions in the pathway cofactor biosynthesis; pyridoxal 5'-phosphate biosynthesis. Catalyzes the hydrolysis of glutamine to glutamate and ammonia as part of the biosynthesis of pyridoxal 5'-phosphate. The resulting ammonia molecule is channeled to the active site of PdxS. The chain is Pyridoxal 5'-phosphate synthase subunit PdxT from Chloroflexus aurantiacus (strain ATCC 29366 / DSM 635 / J-10-fl).